A 409-amino-acid polypeptide reads, in one-letter code: Sulfide-quinone reductase (409 aa).

FAD-binding positions include 8-12, 34-35, and Cys129; these read GGRFG and NK. The active-site Cysteine persulfide intermediate is Cys178. FAD contacts are provided by Asn271, Asp307, and Gly317. Catalysis depends on Cys350, which acts as the Cysteine persulfide intermediate.

Belongs to the SQRD family. As to quaternary structure, monomer. It depends on FAD as a cofactor.

Its subcellular location is the membrane. It carries out the reaction n a quinone + n hydrogen sulfide + n H(+) = polysulfur(n-2) + n a quinol. Its activity is regulated as follows. Inhibited by the quinone analog 2-heptyl-4-hydroxyquinolone N-oxide (HQNO). Inactivated by iodoacetamide treatment. Inhibited by KCN. In terms of biological role, catalyzes the oxidation of sulfides, such as hydrogen sulfide, with the help of a quinone. Has the highest activity with caldariella quinone and decylubiquinone, and lower activity with naphtoquinones. Consecutive reaction cycles lead to the accumulation of a polysulfide product on the active site Cys residues; these products are released when they exceed a critical length, typically as cyclooctasulfur. The chain is Sulfide-quinone reductase from Acidianus ambivalens (Desulfurolobus ambivalens).